The chain runs to 414 residues: Protein RecA (414 aa).

An ATP-binding site is contributed by 78-85 (GPESSGKT). Over residues 361-384 (QEKAVEALKKEEGSKEDALTGNKD) the composition is skewed to basic and acidic residues. The segment at 361-414 (QEKAVEALKKEEGSKEDALTGNKDETDDSAQKNSAASKAKRAEVVGLPADDSLF) is disordered.

Belongs to the RecA family.

The protein resides in the cytoplasm. Functionally, can catalyze the hydrolysis of ATP in the presence of single-stranded DNA, the ATP-dependent uptake of single-stranded DNA by duplex DNA, and the ATP-dependent hybridization of homologous single-stranded DNAs. It interacts with LexA causing its activation and leading to its autocatalytic cleavage. In Treponema denticola (strain ATCC 35405 / DSM 14222 / CIP 103919 / JCM 8153 / KCTC 15104), this protein is Protein RecA.